Here is a 229-residue protein sequence, read N- to C-terminus: Enolase-phosphatase E1 (229 aa).

It belongs to the HAD-like hydrolase superfamily. MasA/MtnC family. As to quaternary structure, monomer. Mg(2+) serves as cofactor.

It carries out the reaction 5-methylsulfanyl-2,3-dioxopentyl phosphate + H2O = 1,2-dihydroxy-5-(methylsulfanyl)pent-1-en-3-one + phosphate. It functions in the pathway amino-acid biosynthesis; L-methionine biosynthesis via salvage pathway; L-methionine from S-methyl-5-thio-alpha-D-ribose 1-phosphate: step 3/6. The protein operates within amino-acid biosynthesis; L-methionine biosynthesis via salvage pathway; L-methionine from S-methyl-5-thio-alpha-D-ribose 1-phosphate: step 4/6. In terms of biological role, bifunctional enzyme that catalyzes the enolization of 2,3-diketo-5-methylthiopentyl-1-phosphate (DK-MTP-1-P) into the intermediate 2-hydroxy-3-keto-5-methylthiopentenyl-1-phosphate (HK-MTPenyl-1-P), which is then dephosphorylated to form the acireductone 1,2-dihydroxy-3-keto-5-methylthiopentene (DHK-MTPene). The protein is Enolase-phosphatase E1 of Pectobacterium carotovorum subsp. carotovorum (strain PC1).